The chain runs to 261 residues: uncharacterized protein (261 aa).

It belongs to the FrhB family.

This is an uncharacterized protein from Methanocaldococcus jannaschii (strain ATCC 43067 / DSM 2661 / JAL-1 / JCM 10045 / NBRC 100440) (Methanococcus jannaschii).